Reading from the N-terminus, the 276-residue chain is Glutamate racemase (276 aa).

Substrate contacts are provided by residues 10–11 (DS) and 42–43 (YG). Cys73 serves as the catalytic Proton donor/acceptor. 74–75 (NS) serves as a coordination point for substrate. Residue Cys183 is the Proton donor/acceptor of the active site. 184-185 (TH) contributes to the substrate binding site.

The protein belongs to the aspartate/glutamate racemases family.

The enzyme catalyses L-glutamate = D-glutamate. It participates in cell wall biogenesis; peptidoglycan biosynthesis. Functionally, provides the (R)-glutamate required for cell wall biosynthesis. This is Glutamate racemase from Parafrankia sp. (strain EAN1pec).